We begin with the raw amino-acid sequence, 611 residues long: DNA mismatch repair protein MutL (611 aa).

The tract at residues 364–384 (NVNSKPSKYRPATSPTVPKYT) is disordered.

The protein belongs to the DNA mismatch repair MutL/HexB family.

Functionally, this protein is involved in the repair of mismatches in DNA. It is required for dam-dependent methyl-directed DNA mismatch repair. May act as a 'molecular matchmaker', a protein that promotes the formation of a stable complex between two or more DNA-binding proteins in an ATP-dependent manner without itself being part of a final effector complex. This is DNA mismatch repair protein MutL from Rickettsia bellii (strain OSU 85-389).